Reading from the N-terminus, the 617-residue chain is Dihydroxy-acid dehydratase (617 aa).

Asp81 provides a ligand contact to Mg(2+). Cys122 is a [2Fe-2S] cluster binding site. The Mg(2+) site is built by Asp123 and Lys124. At Lys124 the chain carries N6-carboxylysine. Cys197 contacts [2Fe-2S] cluster. A Mg(2+)-binding site is contributed by Glu493. Ser519 acts as the Proton acceptor in catalysis.

This sequence belongs to the IlvD/Edd family. In terms of assembly, homodimer. The cofactor is [2Fe-2S] cluster. Requires Mg(2+) as cofactor.

The enzyme catalyses (2R)-2,3-dihydroxy-3-methylbutanoate = 3-methyl-2-oxobutanoate + H2O. It carries out the reaction (2R,3R)-2,3-dihydroxy-3-methylpentanoate = (S)-3-methyl-2-oxopentanoate + H2O. It participates in amino-acid biosynthesis; L-isoleucine biosynthesis; L-isoleucine from 2-oxobutanoate: step 3/4. It functions in the pathway amino-acid biosynthesis; L-valine biosynthesis; L-valine from pyruvate: step 3/4. Functions in the biosynthesis of branched-chain amino acids. Catalyzes the dehydration of (2R,3R)-2,3-dihydroxy-3-methylpentanoate (2,3-dihydroxy-3-methylvalerate) into 2-oxo-3-methylpentanoate (2-oxo-3-methylvalerate) and of (2R)-2,3-dihydroxy-3-methylbutanoate (2,3-dihydroxyisovalerate) into 2-oxo-3-methylbutanoate (2-oxoisovalerate), the penultimate precursor to L-isoleucine and L-valine, respectively. The chain is Dihydroxy-acid dehydratase from Corynebacterium aurimucosum (strain ATCC 700975 / DSM 44827 / CIP 107346 / CN-1) (Corynebacterium nigricans).